The chain runs to 463 residues: Senescence/dehydration-associated protein At3g51250 (463 aa).

Basic and acidic residues predominate over residues 1-12 (MNPSHGGDDKQR). 3 disordered regions span residues 1-31 (MNPS…FAST), 52-74 (PNLF…PQAT), and 146-172 (IHPP…KSKS). Residues 19-31 (VDQSIPDNPFAST) are compositionally biased toward polar residues. One can recognise a Senescence domain in the interval 269–437 (IASGSGKLIR…AWVAFKIRKA (169 aa)).

The chain is Senescence/dehydration-associated protein At3g51250 from Arabidopsis thaliana (Mouse-ear cress).